We begin with the raw amino-acid sequence, 585 residues long: Arginine--tRNA ligase (585 aa).

The 'HIGH' region signature appears at 131–141 (ANPTGPMHVGH).

This sequence belongs to the class-I aminoacyl-tRNA synthetase family. Monomer.

It is found in the cytoplasm. The catalysed reaction is tRNA(Arg) + L-arginine + ATP = L-arginyl-tRNA(Arg) + AMP + diphosphate. The chain is Arginine--tRNA ligase from Bartonella quintana (strain Toulouse) (Rochalimaea quintana).